Reading from the N-terminus, the 282-residue chain is E3 ubiquitin-protein ligase SIAH1 (282 aa).

Positions Met1–Pro17 are enriched in polar residues. Positions Met1–Val22 are disordered. At Ser19 the chain carries Phosphoserine; by ATM and ATR. An RING-type zinc finger spans residues Cys41–Arg76. The tract at residues Val90 to Cys282 is SBD. An SIAH-type zinc finger spans residues Ser93–Lys153. Residues Cys98, Cys105, His117, Cys121, Cys128, Cys135, His147, and His152 each contribute to the Zn(2+) site.

Belongs to the SINA (Seven in absentia) family. In terms of assembly, homodimer. Interacts with group 1 glutamate receptors GRM1 and GRM5. Interacts with DAB1, which may inhibit its activity. Interacts with UBE2E2. Interacts with PEG3. Interacts with GAPDH; leading to stabilize SIAH1. Component of some large E3 complex composed of UBE2D1, SIAH1, CACYBP/SIP, SKP1, APC and TBL1X. Interacts with UBE2I. Interacts with alpha-tubulin. Interacts with PEG10, which may inhibit its activity. Interacts with KHDRBS3. Interacts with SNCAIP. Interacts with HIPK2; the interaction is promoted by DAZAP2 and results in SIAH1-mediated ubiquitination and subsequent proteasomal degradation of HIPK2. Interacts with DAZAP2; the interaction is decreased following phosphorylation of DAZAP2 by HIPK2. Interacts with Bassoon/BSN and Piccolo/PLCO; these interactions negatively regulate SIAH1 E3 ligase activity. Interacts with DCC. Interacts with AXIN1; catalyzes AXIN1 ubiquitination and subsequent proteasome-mediated ubiquitin-dependent degradation. Phosphorylated on Ser-19 by ATM and ATR. This phosphorylation disrupts SIAH1 interaction with HIPK2, and subsequent proteasomal degradation of HIPK2. As to expression, widely expressed at a low level. Down-regulated in advanced hepatocellular carcinomas.

The protein localises to the cytoplasm. Its subcellular location is the nucleus. It carries out the reaction S-ubiquitinyl-[E2 ubiquitin-conjugating enzyme]-L-cysteine + [acceptor protein]-L-lysine = [E2 ubiquitin-conjugating enzyme]-L-cysteine + N(6)-ubiquitinyl-[acceptor protein]-L-lysine.. Its pathway is protein modification; protein ubiquitination. Its activity is regulated as follows. Inhibited by interaction with SNCAIP (isoform 2, but not isoform 1). May be inhibited by interaction with PEG10. Its function is as follows. E3 ubiquitin-protein ligase that mediates ubiquitination and subsequent proteasomal degradation of target proteins. E3 ubiquitin ligases accept ubiquitin from an E2 ubiquitin-conjugating enzyme in the form of a thioester and then directly transfers the ubiquitin to targeted substrates. Mediates E3 ubiquitin ligase activity either through direct binding to substrates or by functioning as the essential RING domain subunit of larger E3 complexes. Triggers the ubiquitin-mediated degradation of many substrates, including proteins involved in transcription regulation (ELL2, MYB, POU2AF1, PML and RBBP8), a cell surface receptor (DCC), the cell-surface receptor-type tyrosine kinase FLT3, the cytoplasmic signal transduction molecules (KLF10/TIEG1 and NUMB), an antiapoptotic protein (BAG1), a microtubule motor protein (KIF22), a protein involved in synaptic vesicle function in neurons (SYP), a structural protein (CTNNB1) and SNCAIP. Confers constitutive instability to HIPK2 through proteasomal degradation. It is thereby involved in many cellular processes such as apoptosis, tumor suppression, cell cycle, axon guidance, transcription regulation, spermatogenesis and TNF-alpha signaling. Has some overlapping function with SIAH2. Induces apoptosis in cooperation with PEG3. Upon nitric oxid (NO) generation that follows apoptotic stimulation, interacts with S-nitrosylated GAPDH, mediating the translocation of GAPDH to the nucleus. GAPDH acts as a stabilizer of SIAH1, facilitating the degradation of nuclear proteins. Mediates ubiquitination and degradation of EGLN2 and EGLN3 in response to the unfolded protein response (UPR), leading to their degradation and subsequent stabilization of ATF4. Also part of the Wnt signaling pathway in which it mediates the Wnt-induced ubiquitin-mediated proteasomal degradation of AXIN1. This is E3 ubiquitin-protein ligase SIAH1 (SIAH1) from Homo sapiens (Human).